A 67-amino-acid polypeptide reads, in one-letter code: DNA gyrase inhibitor YacG (67 aa).

Zn(2+)-binding residues include cysteine 9, cysteine 12, cysteine 28, and cysteine 32. The interval 48 to 67 (PVSPDAEDELFSEELPPRAH) is disordered.

This sequence belongs to the DNA gyrase inhibitor YacG family. As to quaternary structure, interacts with GyrB. Zn(2+) serves as cofactor.

In terms of biological role, inhibits all the catalytic activities of DNA gyrase by preventing its interaction with DNA. Acts by binding directly to the C-terminal domain of GyrB, which probably disrupts DNA binding by the gyrase. The sequence is that of DNA gyrase inhibitor YacG from Pseudomonas fluorescens (strain ATCC BAA-477 / NRRL B-23932 / Pf-5).